The primary structure comprises 443 residues: Xaa-Pro dipeptidase (443 aa).

Aspartate 246, aspartate 257, histidine 339, glutamate 384, and glutamate 423 together coordinate Mn(2+).

The protein belongs to the peptidase M24B family. Bacterial-type prolidase subfamily. Mn(2+) is required as a cofactor.

It carries out the reaction Xaa-L-Pro dipeptide + H2O = an L-alpha-amino acid + L-proline. In terms of biological role, splits dipeptides with a prolyl residue in the C-terminal position. The polypeptide is Xaa-Pro dipeptidase (Serratia proteamaculans (strain 568)).